We begin with the raw amino-acid sequence, 781 residues long: 5-methyltetrahydropteroyltriglutamate--homocysteine methyltransferase (781 aa).

Residues 20-23 (RELK) and K131 each bind 5-methyltetrahydropteroyltri-L-glutamate. L-homocysteine contacts are provided by residues 453-455 (IGS) and E506. L-methionine contacts are provided by residues 453-455 (IGS) and E506. 5-methyltetrahydropteroyltri-L-glutamate-binding positions include 537–538 (RC) and W583. An L-homocysteine-binding site is contributed by D621. D621 provides a ligand contact to L-methionine. E627 contacts 5-methyltetrahydropteroyltri-L-glutamate. The Zn(2+) site is built by H663, C665, and E687. H716 acts as the Proton donor in catalysis. Residue C748 coordinates Zn(2+).

This sequence belongs to the vitamin-B12 independent methionine synthase family. The cofactor is Zn(2+).

It carries out the reaction 5-methyltetrahydropteroyltri-L-glutamate + L-homocysteine = tetrahydropteroyltri-L-glutamate + L-methionine. It functions in the pathway amino-acid biosynthesis; L-methionine biosynthesis via de novo pathway; L-methionine from L-homocysteine (MetE route): step 1/1. Its function is as follows. Catalyzes the transfer of a methyl group from 5-methyltetrahydrofolate to homocysteine resulting in methionine formation. This Bradyrhizobium diazoefficiens (strain JCM 10833 / BCRC 13528 / IAM 13628 / NBRC 14792 / USDA 110) protein is 5-methyltetrahydropteroyltriglutamate--homocysteine methyltransferase.